The following is a 347-amino-acid chain: UDP-N-acetylenolpyruvoylglucosamine reductase (347 aa).

One can recognise an FAD-binding PCMH-type domain in the interval 24-195 (FDARARVAAR…VAVTFRLPKA (172 aa)). Residue arginine 171 is part of the active site. The Proton donor role is filled by serine 247. Glutamate 343 is a catalytic residue.

It belongs to the MurB family. The cofactor is FAD.

It localises to the cytoplasm. The enzyme catalyses UDP-N-acetyl-alpha-D-muramate + NADP(+) = UDP-N-acetyl-3-O-(1-carboxyvinyl)-alpha-D-glucosamine + NADPH + H(+). The protein operates within cell wall biogenesis; peptidoglycan biosynthesis. Its function is as follows. Cell wall formation. This Burkholderia pseudomallei (strain 668) protein is UDP-N-acetylenolpyruvoylglucosamine reductase.